Here is a 258-residue protein sequence, read N- to C-terminus: uncharacterized protein (258 aa).

An N-terminal signal peptide occupies residues Met1–Gly20. Residue Cys21 is the site of N-palmitoyl cysteine attachment. Cys21 carries the S-diacylglycerol cysteine lipid modification.

Belongs to the staphylococcal tandem lipoprotein family.

It is found in the cell membrane. This is an uncharacterized protein from Staphylococcus aureus (strain bovine RF122 / ET3-1).